Reading from the N-terminus, the 249-residue chain is Thrombin-like enzyme barnettobin (249 aa).

An N-terminal signal peptide occupies residues 1 to 10 (APKELQVSYA). The propeptide occupies 11 to 16 (HKSSEL). The 224-residue stretch at 17–240 (VIGGDECDIN…YPPWIQSIIA (224 aa)) folds into the Peptidase S1 domain. Disulfide bonds link Cys23–Cys154, Cys41–Cys57, Cys89–Cys247, Cys133–Cys201, Cys165–Cys180, and Cys191–Cys216. Residues His56 and Asp101 each act as charge relay system in the active site. 2 N-linked (GlcNAc...) asparagine glycosylation sites follow: Asn145 and Asn161. The active-site Charge relay system is the Ser195. The N-linked (GlcNAc...) asparagine glycan is linked to Asn242.

It belongs to the peptidase S1 family. Snake venom subfamily. Monomer. Glycoprotein, contains approx. 52% carbohydrate which could be removed by N-glycosidase. Glycosylation is important, since deglycosylated barnettobin loses its clotting and defibrinogenating effects. In terms of tissue distribution, expressed by the venom gland.

Its subcellular location is the secreted. Both coagulant and amidolytic activities are inhibited by PMSF. Amidolytic activity is partially inhibited by DTT, chymostatin, SBTI and TLCK, but not by heparin and EDTA. Functionally, thrombin-like snake venom serine protease that releases only fibrinopeptide A from human Aalpha chain of fibrinogen (specific coagulant activity was 251.7 NIH thrombin units/mg). Also shows fibrino(geno)lytic activities in vitro and defibrinogenating effects in vivo. The sequence is that of Thrombin-like enzyme barnettobin from Bothrops barnetti (Barnett's lancehead).